The chain runs to 203 residues: Holliday junction branch migration complex subunit RuvA (203 aa).

The domain I stretch occupies residues 1 to 64 (MIGRLRGIIL…EDAQLLYGFN (64 aa)). Positions 65–142 (NKQERMLFRE…KGLHGDLFTP (78 aa)) are domain II. The segment at 143–154 (AADLVLTSPNGP) is flexible linker. Positions 155-203 (TSDDAEQEAVAALVALGYKPQEASRMVSKIAKPDANSETLIREALRAAL) are domain III.

It belongs to the RuvA family. Homotetramer. Forms an RuvA(8)-RuvB(12)-Holliday junction (HJ) complex. HJ DNA is sandwiched between 2 RuvA tetramers; dsDNA enters through RuvA and exits via RuvB. An RuvB hexamer assembles on each DNA strand where it exits the tetramer. Each RuvB hexamer is contacted by two RuvA subunits (via domain III) on 2 adjacent RuvB subunits; this complex drives branch migration. In the full resolvosome a probable DNA-RuvA(4)-RuvB(12)-RuvC(2) complex forms which resolves the HJ.

The protein resides in the cytoplasm. The RuvA-RuvB-RuvC complex processes Holliday junction (HJ) DNA during genetic recombination and DNA repair, while the RuvA-RuvB complex plays an important role in the rescue of blocked DNA replication forks via replication fork reversal (RFR). RuvA specifically binds to HJ cruciform DNA, conferring on it an open structure. The RuvB hexamer acts as an ATP-dependent pump, pulling dsDNA into and through the RuvAB complex. HJ branch migration allows RuvC to scan DNA until it finds its consensus sequence, where it cleaves and resolves the cruciform DNA. This is Holliday junction branch migration complex subunit RuvA from Enterobacter sp. (strain 638).